The following is a 574-amino-acid chain: Penicillin-binding protein activator LpoA (574 aa).

The signal sequence occupies residues 1–25 (MTILLQRAKFKKRLMPILFPLMLAG). Residue C26 is the site of N-palmitoyl cysteine attachment. C26 carries S-diacylglycerol cysteine lipidation.

The protein belongs to the LpoA family. Interacts with PBP1a.

The protein resides in the cell outer membrane. Regulator of peptidoglycan synthesis that is essential for the function of penicillin-binding protein 1A (PBP1a). The chain is Penicillin-binding protein activator LpoA from Mannheimia succiniciproducens (strain KCTC 0769BP / MBEL55E).